We begin with the raw amino-acid sequence, 309 residues long: Putative G-protein coupled receptor B0244.4 (309 aa).

6 helical membrane-spanning segments follow: residues 39 to 59 (SIIF…ACFL), 82 to 102 (YIFM…MLAL), 114 to 134 (IYFL…GSYV), 162 to 182 (FAIA…MFQA), 204 to 224 (IMLV…SFVL), and 256 to 276 (WTLF…FYLV).

Belongs to the G-protein coupled receptor 1 family. B0244 subfamily.

It is found in the cell membrane. In Caenorhabditis elegans, this protein is Putative G-protein coupled receptor B0244.4.